Consider the following 256-residue polypeptide: uncharacterized protein (256 aa).

Residues 1–24 form the signal peptide; that stretch reads MIKRVNKLVLGISFLFLIISIFAG. Cys-25 is lipidated: N-palmitoyl cysteine. Cys-25 carries the S-diacylglycerol cysteine lipid modification.

It belongs to the staphylococcal tandem lipoprotein family.

It is found in the cell membrane. This is an uncharacterized protein from Staphylococcus aureus (strain Mu50 / ATCC 700699).